The chain runs to 319 residues: Lambda-crystallin homolog (319 aa).

N-acetylalanine is present on Ala-2. Residue Ser-3 is modified to Phosphoserine. Residues 16 to 17, Asp-36, Glu-97, and Lys-102 contribute to the NAD(+) site; that span reads LI.

It belongs to the 3-hydroxyacyl-CoA dehydrogenase family. In terms of assembly, homodimer.

Its subcellular location is the cytoplasm. It catalyses the reaction L-gulonate + NAD(+) = 3-dehydro-L-gulonate + NADH + H(+). Its activity is regulated as follows. Inhibited by malonate. In terms of biological role, has high L-gulonate 3-dehydrogenase activity. It also exhibits low dehydrogenase activity toward L-3-hydroxybutyrate (HBA) and L-threonate. The protein is Lambda-crystallin homolog (Cryl1) of Rattus norvegicus (Rat).